Consider the following 33-residue polypeptide: MLLVSRNICRIKGNTIDWRNLKKDLSMTWIILK.

It localises to the cytoplasm. It is found in the nucleus. This is an uncharacterized protein from Schizosaccharomyces pombe (strain 972 / ATCC 24843) (Fission yeast).